The sequence spans 181 residues: ATP synthase subunit b, chloroplastic (181 aa).

The helical transmembrane segment at 28-50 (IINLSVVLGVLIYFGKGVLSNLL) threads the bilayer.

The protein belongs to the ATPase B chain family. As to quaternary structure, F-type ATPases have 2 components, F(1) - the catalytic core - and F(0) - the membrane proton channel. F(1) has five subunits: alpha(3), beta(3), gamma(1), delta(1), epsilon(1). F(0) has four main subunits: a(1), b(1), b'(1) and c(10-14). The alpha and beta chains form an alternating ring which encloses part of the gamma chain. F(1) is attached to F(0) by a central stalk formed by the gamma and epsilon chains, while a peripheral stalk is formed by the delta, b and b' chains.

The protein resides in the plastid. It is found in the chloroplast thylakoid membrane. Its function is as follows. F(1)F(0) ATP synthase produces ATP from ADP in the presence of a proton or sodium gradient. F-type ATPases consist of two structural domains, F(1) containing the extramembraneous catalytic core and F(0) containing the membrane proton channel, linked together by a central stalk and a peripheral stalk. During catalysis, ATP synthesis in the catalytic domain of F(1) is coupled via a rotary mechanism of the central stalk subunits to proton translocation. In terms of biological role, component of the F(0) channel, it forms part of the peripheral stalk, linking F(1) to F(0). The chain is ATP synthase subunit b, chloroplastic from Cryptomeria japonica (Japanese cedar).